A 594-amino-acid polypeptide reads, in one-letter code: UvrABC system protein C (594 aa).

Positions 14 to 91 constitute a GIY-YIG domain; the sequence is DQPGCYLMKD…IKKHDPKYNI (78 aa). Positions 196–231 constitute a UVR domain; that stretch reads KEVRSELETKMYEASEKLEFERAKELRDQIAHIDAI.

Belongs to the UvrC family. In terms of assembly, interacts with UvrB in an incision complex.

It localises to the cytoplasm. In terms of biological role, the UvrABC repair system catalyzes the recognition and processing of DNA lesions. UvrC both incises the 5' and 3' sides of the lesion. The N-terminal half is responsible for the 3' incision and the C-terminal half is responsible for the 5' incision. The sequence is that of UvrABC system protein C from Bacillus cereus (strain AH187).